Reading from the N-terminus, the 79-residue chain is uncharacterized protein (79 aa).

This is an uncharacterized protein from Listeria innocua serovar 6a (strain ATCC BAA-680 / CLIP 11262).